Consider the following 1174-residue polypeptide: DNA polymerase III subunit alpha (1174 aa).

This sequence belongs to the DNA polymerase type-C family. DnaE subfamily. DNA polymerase III contains a core (composed of alpha, epsilon and theta chains) that associates with a tau subunit. This core dimerizes to form the PolIII' complex. PolIII' associates with the gamma complex (composed of gamma, delta, delta', psi and chi chains) and with the beta chain to form the complete DNA polymerase III complex.

It localises to the cytoplasm. The catalysed reaction is DNA(n) + a 2'-deoxyribonucleoside 5'-triphosphate = DNA(n+1) + diphosphate. Its function is as follows. DNA polymerase III is a complex, multichain enzyme responsible for most of the replicative synthesis in bacteria. This DNA polymerase also exhibits 3' to 5' exonuclease activity. The alpha chain is the DNA polymerase. The polypeptide is DNA polymerase III subunit alpha (dnaE) (Yersinia pestis).